The sequence spans 420 residues: Histidine--tRNA ligase (420 aa).

The protein belongs to the class-II aminoacyl-tRNA synthetase family. In terms of assembly, homodimer.

The protein resides in the cytoplasm. The catalysed reaction is tRNA(His) + L-histidine + ATP = L-histidyl-tRNA(His) + AMP + diphosphate + H(+). In Streptomyces avermitilis (strain ATCC 31267 / DSM 46492 / JCM 5070 / NBRC 14893 / NCIMB 12804 / NRRL 8165 / MA-4680), this protein is Histidine--tRNA ligase.